Here is a 282-residue protein sequence, read N- to C-terminus: MQIVNISAYKFVSLDDIETLRPAMRERCEAAGLKGTILLAPEGINMFLAGPRAAIDGFMDWLHADARFADIAPKESLSENQPFKRMLVRAKKEIITMKMPLIRPEEGRAPSVRPAELKRWLDQGHDDEGRPVVMLDTRNDFEVAVGTFEDAVEYDIAKFSEFPEAVAAHKAELEGKTVVSFCTGGIRCEKAAIHMQEVGVERVYQLEGGILKYFEEVGGSHYRGDCFVFDYRTALNPNLEPAGPKQCFACRAVVTPQEQQSPHYVVGKSCPHCIGSKDQAAA.

A Rhodanese domain is found at 128–222; it reads EGRPVVMLDT…YFEEVGGSHY (95 aa). The active-site Cysteine persulfide intermediate is the Cys-182.

It belongs to the TrhO family.

The catalysed reaction is uridine(34) in tRNA + AH2 + O2 = 5-hydroxyuridine(34) in tRNA + A + H2O. Catalyzes oxygen-dependent 5-hydroxyuridine (ho5U) modification at position 34 in tRNAs. This Cupriavidus necator (strain ATCC 17699 / DSM 428 / KCTC 22496 / NCIMB 10442 / H16 / Stanier 337) (Ralstonia eutropha) protein is tRNA uridine(34) hydroxylase.